Here is a 154-residue protein sequence, read N- to C-terminus: Protein X (154 aa).

The interval 68–117 (PCALRFTSARRMETTVNAHQVLPKVLHKRTLGLSAMSTTDLEAYFKDCLF) is mitochondrial targeting sequence.

This sequence belongs to the orthohepadnavirus protein X family. May form homodimer. May interact with host CEBPA, CFLAR, CREB1, DDB1, E4F1, HBXIP, HSPD1/HSP60, NFKBIA, POLR2E and SMAD4. Interacts with host SMC5-SMC6 complex and induces its degradation. Interacts with host TRPC4AP; leading to prevent ubiquitination of TRPC4AP. Interacts with host PLSCR1; this interaction promotes ubiquitination and degradation of HBx and impairs HBx-mediated cell proliferation. Post-translationally, a fraction may be phosphorylated in insect cells and HepG2 cells, a human hepatoblastoma cell line. Phosphorylated in vitro by host protein kinase C or mitogen-activated protein kinase. N-acetylated in insect cells.

The protein resides in the host cytoplasm. It is found in the host nucleus. It localises to the host mitochondrion. In terms of biological role, multifunctional protein that plays a role in silencing host antiviral defenses and promoting viral transcription. Does not seem to be essential for HBV infection. May be directly involved in development of cirrhosis and liver cancer (hepatocellular carcinoma). Most of cytosolic activities involve modulation of cytosolic calcium. The effect on apoptosis is controversial depending on the cell types in which the studies have been conducted. May induce apoptosis by localizing in mitochondria and causing loss of mitochondrial membrane potential. May also modulate apoptosis by binding host CFLAR, a key regulator of the death-inducing signaling complex (DISC). Promotes viral transcription by using the host E3 ubiquitin ligase DDB1 to target the SMC5-SMC6 complex to proteasomal degradation. This host complex would otherwise bind to viral episomal DNA, and prevents its transcription. Moderately stimulates transcription of many different viral and cellular transcription elements. Promoters and enhancers stimulated by HBx contain DNA binding sites for NF-kappa-B, AP-1, AP-2, c-EBP, ATF/CREB, or the calcium-activated factor NF-AT. The polypeptide is Protein X (Hepatitis B virus genotype C subtype adr (strain Japan/adr4/1983) (HBV-C)).